The sequence spans 514 residues: Coiled-coil domain-containing protein 174 (514 aa).

Disordered regions lie at residues 42–83 (AKPK…DQSR) and 137–162 (TLEKETDDEEIEPEMEIPPPEDPDEE). The span at 63–83 (KRAEKDIEQKAEEDQTLDQSR) shows a compositional bias: basic and acidic residues. The stretch at 66-98 (EKDIEQKAEEDQTLDQSRKKLEEKAKLYEKMTK) forms a coiled coil. Positions 141–162 (ETDDEEIEPEMEIPPPEDPDEE) are enriched in acidic residues. Coiled-coil stretches lie at residues 203–227 (LLSEDMKRELQRQQWEKEEEEALRK) and 266–321 (LDML…LENG). 2 disordered regions span residues 270–291 (REQTLDQRTKREQLKEKRKAAL) and 306–490 (LREE…PSAH). Composition is skewed to basic and acidic residues over residues 335 to 354 (EVPRPSRKVEVVIQERRDTK) and 376 to 388 (KKQEELRDERDPE). Residues 405–418 (YSSQNLNSPETSPG) show a composition bias toward polar residues. Residues 420-429 (TEPEISENQK) are compositionally biased toward basic and acidic residues.

The protein localises to the nucleus. In terms of biological role, probably involved in neuronal development. This Gallus gallus (Chicken) protein is Coiled-coil domain-containing protein 174 (CCDC174).